Reading from the N-terminus, the 220-residue chain is MHIMEGFLPPRWAAAWTLAAAPIVVYGAKQTIDIIRQDARVKALVAIGIAFVFILSALKFPSVTGSTSHPTGTGLLVVLFGPAVTAFTATIVLLYQALLLAHGGITTLGANVVAMGIIGPTVGWTAYQIIRPYTSLERATFIAAVLTDWTTYLVTSLQLGAAFPAGDGLDAIIISALDFAAIFTLTQVPIGILEGILAAAVIGYLTRLGSETIESLEVAA.

5 helical membrane-spanning segments follow: residues 6-26 (GFLP…IVVY), 43-63 (ALVA…FPSV), 74-94 (GLLV…IVLL), 98-118 (LLLA…MGII), and 182-202 (IFTL…AAVI).

The protein belongs to the CbiM family. As to quaternary structure, forms an energy-coupling factor (ECF) transporter complex composed of an ATP-binding protein (A component, CbiO), a transmembrane protein (T component, CbiQ) and 2 possible substrate-capture proteins (S components, CbiM and CbiN) of unknown stoichimetry.

It localises to the cell membrane. It functions in the pathway cofactor biosynthesis; adenosylcobalamin biosynthesis. Its function is as follows. Part of the energy-coupling factor (ECF) transporter complex CbiMNOQ involved in cobalt import. The chain is Putative cobalt transport protein CbiM from Haloquadratum walsbyi (strain DSM 16790 / HBSQ001).